Consider the following 363-residue polypeptide: MKKYIVFAIIPFLFACSSSTLNDDYDEAFAKDTQGLDILTGQFSHNIDQIWGVNELLVASRKDYVKYTDNFYTRSHISFDEGSIMIETLGDKSRLYHSIIHTLLMGADAKGIDLFTSGDVPISSRPFLVGLVVDHKGKQVKNIATASNFANYLLQNKLQTRYLTNGNPVQYVIIPMVANHVAVRAQRYLPLIRKAAGRYGIDESLILGIMQTESSFNPYAISYANAIGLMQVVPHTAGRDVFRLKGLNGQPSKKYLFNPAKNIDTGVAYLTLLRDKYLDGITNPTSKRFAMISAYNSGAGAVLRVFHNDRDIAINKINRLYPEQVYRILTTMHPSEQARNYLLKVDKAQKSYRVIKNSESDLP.

Residues 1 to 15 form the signal peptide; the sequence is MKKYIVFAIIPFLFA. A lipid anchor (N-palmitoyl cysteine) is attached at Cys16. A lipid anchor (S-diacylglycerol cysteine) is attached at Cys16.

The protein belongs to the transglycosylase Slt family.

It localises to the cell outer membrane. The enzyme catalyses Exolytic cleavage of the (1-&gt;4)-beta-glycosidic linkage between N-acetylmuramic acid (MurNAc) and N-acetylglucosamine (GlcNAc) residues in peptidoglycan, from either the reducing or the non-reducing ends of the peptidoglycan chains, with concomitant formation of a 1,6-anhydrobond in the MurNAc residue.. Its function is as follows. Murein-degrading enzyme. May play a role in recycling of muropeptides during cell elongation and/or cell division. In Histophilus somni (strain 129Pt) (Haemophilus somnus), this protein is Membrane-bound lytic murein transglycosylase C.